We begin with the raw amino-acid sequence, 505 residues long: Probable cytochrome P450 28a5 (505 aa).

Cys450 is a heme binding site.

This sequence belongs to the cytochrome P450 family. Heme serves as cofactor.

It localises to the endoplasmic reticulum membrane. Its subcellular location is the microsome membrane. In terms of biological role, may be involved in the metabolism of insect hormones and in the breakdown of synthetic insecticides. This is Probable cytochrome P450 28a5 (Cyp28a5) from Drosophila melanogaster (Fruit fly).